A 90-amino-acid polypeptide reads, in one-letter code: UPF0297 protein Swol_0469 (90 aa).

The protein belongs to the UPF0297 family.

The protein is UPF0297 protein Swol_0469 of Syntrophomonas wolfei subsp. wolfei (strain DSM 2245B / Goettingen).